The chain runs to 513 residues: ATP synthase subunit alpha (513 aa).

Residue 169–176 (GDRQVGKT) participates in ATP binding.

Belongs to the ATPase alpha/beta chains family. As to quaternary structure, F-type ATPases have 2 components, CF(1) - the catalytic core - and CF(0) - the membrane proton channel. CF(1) has five subunits: alpha(3), beta(3), gamma(1), delta(1), epsilon(1). CF(0) has three main subunits: a(1), b(2) and c(9-12). The alpha and beta chains form an alternating ring which encloses part of the gamma chain. CF(1) is attached to CF(0) by a central stalk formed by the gamma and epsilon chains, while a peripheral stalk is formed by the delta and b chains.

The protein localises to the cell inner membrane. The catalysed reaction is ATP + H2O + 4 H(+)(in) = ADP + phosphate + 5 H(+)(out). Its function is as follows. Produces ATP from ADP in the presence of a proton gradient across the membrane. The alpha chain is a regulatory subunit. The chain is ATP synthase subunit alpha from Aeromonas salmonicida (strain A449).